A 215-amino-acid polypeptide reads, in one-letter code: Octanoyltransferase (215 aa).

The BPL/LPL catalytic domain maps to 31–206 (TDAPDEVWLV…QLVKHLDYAE (176 aa)). Substrate-binding positions include 70-77 (RGGQVTYH), 137-139 (SLG), and 150-152 (GLA). The Acyl-thioester intermediate role is filled by cysteine 168.

Belongs to the LipB family.

Its subcellular location is the cytoplasm. It carries out the reaction octanoyl-[ACP] + L-lysyl-[protein] = N(6)-octanoyl-L-lysyl-[protein] + holo-[ACP] + H(+). It functions in the pathway protein modification; protein lipoylation via endogenous pathway; protein N(6)-(lipoyl)lysine from octanoyl-[acyl-carrier-protein]: step 1/2. Catalyzes the transfer of endogenously produced octanoic acid from octanoyl-acyl-carrier-protein onto the lipoyl domains of lipoate-dependent enzymes. Lipoyl-ACP can also act as a substrate although octanoyl-ACP is likely to be the physiological substrate. This Pseudomonas fluorescens (strain ATCC BAA-477 / NRRL B-23932 / Pf-5) protein is Octanoyltransferase.